The chain runs to 347 residues: Two pore potassium channel a (347 aa).

A compositionally biased stretch (polar residues) spans 1 to 11 (MDDNSIQQSLL). Residues 1 to 49 (MDDNSIQQSLLADNPNVLQRKPSEGVNRFRRCRSTPSTDPLQGPPEKGS) are disordered. Residues 1 to 65 (MDDNSIQQSL…LFKEMRPSFR (65 aa)) lie on the Cytoplasmic side of the membrane. The helical transmembrane segment at 66–86 (LVGLLLFIYLLVGVLAFYAVM) threads the bilayer. Residues 99-118 (DALYFCVVTMTTVGYGDLVP) constitute an intramembrane region (pore-forming). A helical membrane pass occupies residues 125–145 (LLACAFVFMGMAVVALFVSKV). The Cytoplasmic segment spans residues 146–183 (ADYLVEKQEVLFFKALHTNLKGGETKMLRAIETNRIKY). The helical transmembrane segment at 184 to 204 (KFYTNALLLVLSIISGTVFLW) threads the bilayer. The segment at residues 213 to 232 (DSFYCVCATITTLGYGDKSF) is an intramembrane region (pore-forming). Residues 239-259 (VFAVFWIITSTIIMAQFFMYL) traverse the membrane as a helical segment. At 260 to 347 (AEIYTERRQK…YDLTLAQSAQ (88 aa)) the chain is on the cytoplasmic side. EF-hand domains are found at residues 276 to 311 (LTRK…ELGK) and 315 to 347 (EEIS…QSAQ). Positions 289, 291, 293, 295, 300, 328, 330, 332, 334, and 339 each coordinate Ca(2+).

This sequence belongs to the two pore domain potassium channel (TC 1.A.1.7) family. Homodimer.

The protein localises to the vacuole membrane. Its function is as follows. Highly selective inward-rectifying potassium channel that is specifically located in the tonoplast of large vacuoles. Functions independently of the voltage difference across the membrane. The protein is Two pore potassium channel a (TPKA) of Oryza sativa subsp. japonica (Rice).